The primary structure comprises 544 residues: Methionine--tRNA ligase 1 (544 aa).

The 'HIGH' region signature appears at 10-20; the sequence is PYANGSLHLGH. Residues C141, C144, C153, and C156 each contribute to the Zn(2+) site. The 'KMSKS' region signature appears at 329 to 333; it reads KLSTS. An ATP-binding site is contributed by T332.

Belongs to the class-I aminoacyl-tRNA synthetase family. MetG type 1 subfamily. As to quaternary structure, monomer. Zn(2+) is required as a cofactor.

It localises to the cytoplasm. The enzyme catalyses tRNA(Met) + L-methionine + ATP = L-methionyl-tRNA(Met) + AMP + diphosphate. Functionally, is required not only for elongation of protein synthesis but also for the initiation of all mRNA translation through initiator tRNA(fMet) aminoacylation. This Bacillus cereus (strain ATCC 10987 / NRS 248) protein is Methionine--tRNA ligase 1.